The chain runs to 108 residues: Long neurotoxin 13 (108 aa).

The first 21 residues, 1–21 (MKTLLLTLVVVTIVCLDLAYT), serve as a signal peptide directing secretion. 5 disulfides stabilise this stretch: cysteine 24-cysteine 42, cysteine 35-cysteine 63, cysteine 48-cysteine 52, cysteine 67-cysteine 78, and cysteine 79-cysteine 84.

This sequence belongs to the three-finger toxin family. Long-chain subfamily. Type II alpha-neurotoxin sub-subfamily. As to expression, expressed by the venom gland.

The protein localises to the secreted. Its function is as follows. Binds with high affinity to muscular (alpha-1/CHRNA1) and neuronal (alpha-7/CHRNA7) nicotinic acetylcholine receptor (nAChR) and inhibits acetylcholine from binding to the receptor, thereby impairing neuromuscular and neuronal transmission. The protein is Long neurotoxin 13 of Drysdalia coronoides (White-lipped snake).